The chain runs to 342 residues: L-threonine 3-dehydrogenase (342 aa).

Cys38 contacts Zn(2+). Catalysis depends on charge relay system residues Thr40 and His43. 6 residues coordinate Zn(2+): His63, Glu64, Cys93, Cys96, Cys99, and Cys107. NAD(+)-binding positions include Ile175, Asp195, Arg200, 262 to 264, and 286 to 287; these read LGI and IY.

It belongs to the zinc-containing alcohol dehydrogenase family. In terms of assembly, homotetramer. Requires Zn(2+) as cofactor.

The protein resides in the cytoplasm. The catalysed reaction is L-threonine + NAD(+) = (2S)-2-amino-3-oxobutanoate + NADH + H(+). It participates in amino-acid degradation; L-threonine degradation via oxydo-reductase pathway; glycine from L-threonine: step 1/2. Its function is as follows. Catalyzes the NAD(+)-dependent oxidation of L-threonine to 2-amino-3-ketobutyrate. The polypeptide is L-threonine 3-dehydrogenase (Aeromonas hydrophila subsp. hydrophila (strain ATCC 7966 / DSM 30187 / BCRC 13018 / CCUG 14551 / JCM 1027 / KCTC 2358 / NCIMB 9240 / NCTC 8049)).